The sequence spans 189 residues: Ion-translocating oxidoreductase complex subunit B (189 aa).

The tract at residues methionine 1–alanine 26 is hydrophobic. The 4Fe-4S domain occupies glutamate 32–valine 90. Residues cysteine 49, cysteine 52, cysteine 57, cysteine 73, cysteine 114, cysteine 117, cysteine 120, cysteine 124, cysteine 144, cysteine 147, cysteine 150, and cysteine 154 each contribute to the [4Fe-4S] cluster site. 2 consecutive 4Fe-4S ferredoxin-type domains span residues lysine 105–lysine 134 and leucine 135–valine 164.

It belongs to the 4Fe4S bacterial-type ferredoxin family. RnfB subfamily. In terms of assembly, the complex is composed of six subunits: RnfA, RnfB, RnfC, RnfD, RnfE and RnfG. [4Fe-4S] cluster serves as cofactor.

It is found in the cell inner membrane. In terms of biological role, part of a membrane-bound complex that couples electron transfer with translocation of ions across the membrane. The chain is Ion-translocating oxidoreductase complex subunit B from Shewanella pealeana (strain ATCC 700345 / ANG-SQ1).